The chain runs to 963 residues: Integrator complex subunit 4 (963 aa).

At lysine 26 the chain carries N6-acetyllysine. 8 HEAT repeats span residues alanine 66–phenylalanine 105, glutamine 145–serine 183, glycine 190–lysine 228, leucine 229–tyrosine 263, isoleucine 277–serine 313, asparagine 369–serine 405, proline 406–leucine 444, and glutamate 446–leucine 484. Residue lysine 791 forms a Glycyl lysine isopeptide (Lys-Gly) (interchain with G-Cter in SUMO1); alternate linkage. Residue lysine 791 forms a Glycyl lysine isopeptide (Lys-Gly) (interchain with G-Cter in SUMO2); alternate linkage.

The protein belongs to the Integrator subunit 4 family. As to quaternary structure, component of the Integrator complex, composed of core subunits INTS1, INTS2, INTS3, INTS4, INTS5, INTS6, INTS7, INTS8, INTS9/RC74, INTS10, INTS11/CPSF3L, INTS12, INTS13, INTS14 and INTS15. The core complex associates with protein phosphatase 2A subunits PPP2CA and PPP2R1A, to form the Integrator-PP2A (INTAC) complex. INTS4 is part of the RNA endonuclease subcomplex, composed of INTS4, INTS9, INTS11 and inositol hexakisphosphate (InsP6). Interacts with BRAT1; interaction is required for the assembly of the RNA endonuclease subcomplex.

Its subcellular location is the nucleus. It is found in the cytoplasm. Functionally, component of the integrator complex, a multiprotein complex that terminates RNA polymerase II (Pol II) transcription in the promoter-proximal region of genes. The integrator complex provides a quality checkpoint during transcription elongation by driving premature transcription termination of transcripts that are unfavorably configured for transcriptional elongation: the complex terminates transcription by (1) catalyzing dephosphorylation of the C-terminal domain (CTD) of Pol II subunit POLR2A/RPB1 and SUPT5H/SPT5, (2) degrading the exiting nascent RNA transcript via endonuclease activity and (3) promoting the release of Pol II from bound DNA. The integrator complex is also involved in terminating the synthesis of non-coding Pol II transcripts, such as enhancer RNAs (eRNAs), small nuclear RNAs (snRNAs), telomerase RNAs and long non-coding RNAs (lncRNAs). Within the integrator complex, INTS4 acts as an scaffold that links INTS9 and INTS11. Mediates recruitment of cytoplasmic dynein to the nuclear envelope, probably as component of the integrator complex. This chain is Integrator complex subunit 4, found in Homo sapiens (Human).